A 601-amino-acid polypeptide reads, in one-letter code: Elongation factor 4 (601 aa).

One can recognise a tr-type G domain in the interval 7-189 (SNVRNFSIVA…AIVTRLPPPK (183 aa)). GTP-binding positions include 19-24 (DHGKST) and 136-139 (NKVD).

Belongs to the TRAFAC class translation factor GTPase superfamily. Classic translation factor GTPase family. LepA subfamily.

It localises to the cell inner membrane. It carries out the reaction GTP + H2O = GDP + phosphate + H(+). In terms of biological role, required for accurate and efficient protein synthesis under certain stress conditions. May act as a fidelity factor of the translation reaction, by catalyzing a one-codon backward translocation of tRNAs on improperly translocated ribosomes. Back-translocation proceeds from a post-translocation (POST) complex to a pre-translocation (PRE) complex, thus giving elongation factor G a second chance to translocate the tRNAs correctly. Binds to ribosomes in a GTP-dependent manner. The chain is Elongation factor 4 from Afipia carboxidovorans (strain ATCC 49405 / DSM 1227 / KCTC 32145 / OM5) (Oligotropha carboxidovorans).